Reading from the N-terminus, the 130-residue chain is Small ribosomal subunit protein uS8 (130 aa).

The protein belongs to the universal ribosomal protein uS8 family. In terms of assembly, part of the 30S ribosomal subunit.

One of the primary rRNA binding proteins, it binds directly to 16S rRNA central domain where it helps coordinate assembly of the platform of the 30S subunit. In Methanococcus maripaludis (strain C6 / ATCC BAA-1332), this protein is Small ribosomal subunit protein uS8.